A 594-amino-acid chain; its full sequence is MSIRRLPEHLVNRIAAGEVVERPASALKELVENSIDAGARRISVSLSEGGLSAIDVADDGCGMTPDEIALALERHATSKLPDDAIEAVTTLGFRGEALPSIGSVADLTIESRVRGADGWHRRVDHGELVGEGPAALPPGTRIRVSNLFAKVPARRKFLRSARAEYAACVDVIKRLAMARPDIGFTLEHEGRRAILVAPDEQRVDRVAALTDRDLAQNSVAVDFRREAVSLTGVAGLPTFNRGVADHQFLFVNGRPVKDRLLIGAVRGAYQDMLARDRHPVIALFVELPGDQVDVNVHPAKTEVRFRDPGLVRGMIVGGLRAALDEAGHRSVQRPSVAALGNWQAGGLPTASSTAPAIPNGFAFGAAAERSGQGSVWDRVADFAPAPMARAEPAYSPPPQQASYPMGVARGQVAATYIVAEAEDGLVIVDQHAAHERLVLERMRRAMADGGVARQALLLPEVVELDEVGCDRLETRIAELAEMGLELERFGPKAMLVRATPALLGQGDVHGLIVDLADELAAYDEALSLKERLDHVAATMACHGSVRAGRTLSVAEMNALLREMEVTPHSGQCNHGRPTWIKLGHGDIEKLFGRK.

This sequence belongs to the DNA mismatch repair MutL/HexB family.

Its function is as follows. This protein is involved in the repair of mismatches in DNA. It is required for dam-dependent methyl-directed DNA mismatch repair. May act as a 'molecular matchmaker', a protein that promotes the formation of a stable complex between two or more DNA-binding proteins in an ATP-dependent manner without itself being part of a final effector complex. The polypeptide is DNA mismatch repair protein MutL (Rhizorhabdus wittichii (strain DSM 6014 / CCUG 31198 / JCM 15750 / NBRC 105917 / EY 4224 / RW1) (Sphingomonas wittichii)).